Reading from the N-terminus, the 340-residue chain is Glucokinase (340 aa).

17 to 22 provides a ligand contact to ATP; the sequence is GDIGGT.

This sequence belongs to the bacterial glucokinase family.

It localises to the cytoplasm. The enzyme catalyses D-glucose + ATP = D-glucose 6-phosphate + ADP + H(+). The sequence is that of Glucokinase from Agrobacterium fabrum (strain C58 / ATCC 33970) (Agrobacterium tumefaciens (strain C58)).